A 133-amino-acid polypeptide reads, in one-letter code: ATP synthase epsilon chain, chloroplastic (133 aa).

The protein belongs to the ATPase epsilon chain family. In terms of assembly, F-type ATPases have 2 components, CF(1) - the catalytic core - and CF(0) - the membrane proton channel. CF(1) has five subunits: alpha(3), beta(3), gamma(1), delta(1), epsilon(1). CF(0) has three main subunits: a, b and c.

It localises to the plastid. It is found in the chloroplast thylakoid membrane. Functionally, produces ATP from ADP in the presence of a proton gradient across the membrane. This chain is ATP synthase epsilon chain, chloroplastic, found in Solanum lycopersicum (Tomato).